The primary structure comprises 256 residues: 3-deoxy-manno-octulosonate cytidylyltransferase (256 aa).

This sequence belongs to the KdsB family.

It localises to the cytoplasm. The enzyme catalyses 3-deoxy-alpha-D-manno-oct-2-ulosonate + CTP = CMP-3-deoxy-beta-D-manno-octulosonate + diphosphate. The protein operates within nucleotide-sugar biosynthesis; CMP-3-deoxy-D-manno-octulosonate biosynthesis; CMP-3-deoxy-D-manno-octulosonate from 3-deoxy-D-manno-octulosonate and CTP: step 1/1. It functions in the pathway bacterial outer membrane biogenesis; lipopolysaccharide biosynthesis. Functionally, activates KDO (a required 8-carbon sugar) for incorporation into bacterial lipopolysaccharide in Gram-negative bacteria. The chain is 3-deoxy-manno-octulosonate cytidylyltransferase from Histophilus somni (strain 2336) (Haemophilus somnus).